The chain runs to 308 residues: MFSNIKDRIRLLFRKDRESYLRFYKMLGFYPKDISIYEQALLHKSLSVKSEKGRLLNNERLEFLGDAILDAVVADIVYKRFEGKREGFLTNTRSKIVQRETLNRLAIEIGLDKLIKYTARQSSHNSYMCGNAFEALVGAIYLDRGYRACKYFMEHRIIGPYINLEKISRKEVNFKSKLIEWSQKNRFEVTFELITQSHDQGYNPTFESEVLVEGISGGKGTGYSKKESQQMAARVALGKIKNDSGFIECIFAAKTARELPQEEVTVSDSKPSDSGAVTPDLSLEEIKKTDVVEQIISEAEEKAFKENA.

An RNase III domain is found at 20 to 145 (YLRFYKMLGF…LVGAIYLDRG (126 aa)). Glutamate 62 is a Mg(2+) binding site. The active site involves aspartate 66. Positions 131 and 134 each coordinate Mg(2+). The active site involves glutamate 134. Residues 173–242 (NFKSKLIEWS…ARVALGKIKN (70 aa)) enclose the DRBM domain. Positions 261–281 (QEEVTVSDSKPSDSGAVTPDL) are disordered.

Belongs to the ribonuclease III family. As to quaternary structure, homodimer. Mg(2+) serves as cofactor.

It is found in the cytoplasm. The catalysed reaction is Endonucleolytic cleavage to 5'-phosphomonoester.. Functionally, digests double-stranded RNA. Involved in the processing of primary rRNA transcript to yield the immediate precursors to the large and small rRNAs (23S and 16S). Processes some mRNAs, and tRNAs when they are encoded in the rRNA operon. Processes pre-crRNA and tracrRNA of type II CRISPR loci if present in the organism. This chain is Ribonuclease 3, found in Phocaeicola vulgatus (strain ATCC 8482 / DSM 1447 / JCM 5826 / CCUG 4940 / NBRC 14291 / NCTC 11154) (Bacteroides vulgatus).